Consider the following 99-residue polypeptide: Small ribosomal subunit protein uS19c (99 aa).

This sequence belongs to the universal ribosomal protein uS19 family.

Its subcellular location is the plastid. It localises to the chloroplast. In terms of biological role, protein S19 forms a complex with S13 that binds strongly to the 16S ribosomal RNA. The polypeptide is Small ribosomal subunit protein uS19c (Oenothera biennis (German evening primrose)).